The following is a 169-amino-acid chain: Endoribonuclease YbeY (169 aa).

Zn(2+) is bound by residues histidine 128, histidine 132, and histidine 138.

This sequence belongs to the endoribonuclease YbeY family. The cofactor is Zn(2+).

It localises to the cytoplasm. Its function is as follows. Single strand-specific metallo-endoribonuclease involved in late-stage 70S ribosome quality control and in maturation of the 3' terminus of the 16S rRNA. In Rhizorhabdus wittichii (strain DSM 6014 / CCUG 31198 / JCM 15750 / NBRC 105917 / EY 4224 / RW1) (Sphingomonas wittichii), this protein is Endoribonuclease YbeY.